The primary structure comprises 157 residues: 6,7-dimethyl-8-ribityllumazine synthase (157 aa).

5-amino-6-(D-ribitylamino)uracil is bound by residues Phe30, 64 to 66 (ALE), and 88 to 90 (CII). 93 to 94 (ET) lines the (2S)-2-hydroxy-3-oxobutyl phosphate pocket. Residue His96 is the Proton donor of the active site. Asn121 provides a ligand contact to 5-amino-6-(D-ribitylamino)uracil. A (2S)-2-hydroxy-3-oxobutyl phosphate-binding site is contributed by Arg135.

This sequence belongs to the DMRL synthase family.

It catalyses the reaction (2S)-2-hydroxy-3-oxobutyl phosphate + 5-amino-6-(D-ribitylamino)uracil = 6,7-dimethyl-8-(1-D-ribityl)lumazine + phosphate + 2 H2O + H(+). It participates in cofactor biosynthesis; riboflavin biosynthesis; riboflavin from 2-hydroxy-3-oxobutyl phosphate and 5-amino-6-(D-ribitylamino)uracil: step 1/2. Catalyzes the formation of 6,7-dimethyl-8-ribityllumazine by condensation of 5-amino-6-(D-ribitylamino)uracil with 3,4-dihydroxy-2-butanone 4-phosphate. This is the penultimate step in the biosynthesis of riboflavin. The sequence is that of 6,7-dimethyl-8-ribityllumazine synthase from Albidiferax ferrireducens (strain ATCC BAA-621 / DSM 15236 / T118) (Rhodoferax ferrireducens).